Reading from the N-terminus, the 154-residue chain is Cindoxin (154 aa).

In terms of domain architecture, Flavodoxin-like spans 3 to 145; the sequence is ALILYGTETG…TAEEWAREIL (143 aa). FMN-binding positions include 9-13 and 89-120; these read TETGN and VFGL…TQVG.

It depends on FMN as a cofactor.

Functionally, involved in the degradation of cineol (eucalyptol). The FMN protein, cindoxin, shuttles electrons between the FAD-containing cindoxin reductase (CinB) and 1,8-cineole 2-endo-monooxygenase (CinA). The protein is Cindoxin (cinC) of Citrobacter braakii.